Reading from the N-terminus, the 488-residue chain is Proline--tRNA ligase (488 aa).

This sequence belongs to the class-II aminoacyl-tRNA synthetase family. ProS type 3 subfamily. Homodimer.

Its subcellular location is the cytoplasm. The catalysed reaction is tRNA(Pro) + L-proline + ATP = L-prolyl-tRNA(Pro) + AMP + diphosphate. In terms of biological role, catalyzes the attachment of proline to tRNA(Pro) in a two-step reaction: proline is first activated by ATP to form Pro-AMP and then transferred to the acceptor end of tRNA(Pro). The sequence is that of Proline--tRNA ligase from Pyrobaculum aerophilum (strain ATCC 51768 / DSM 7523 / JCM 9630 / CIP 104966 / NBRC 100827 / IM2).